Reading from the N-terminus, the 356-residue chain is Glycerophosphodiester phosphodiesterase (356 aa).

The N-terminal stretch at 1–20 (MRGTYCVTLWGGVFAALVAG) is a signal peptide. A lipid anchor (N-palmitoyl cysteine) is attached at cysteine 21. Cysteine 21 carries the S-diacylglycerol cysteine lipid modification. The GP-PDE domain occupies 25 to 314 (RMIVAYRGAA…CHVHTVRKET (290 aa)).

It belongs to the glycerophosphoryl diester phosphodiesterase family. Post-translationally, palmitoylated upon expression of a fusion protein with first 40 residues fused to PhoA in E.coli.

It is found in the cell inner membrane. It carries out the reaction a sn-glycero-3-phosphodiester + H2O = an alcohol + sn-glycerol 3-phosphate + H(+). Glycerophosphoryl diester phosphodiesterase hydrolyzes deacylated phospholipids to G3P and the corresponding alcohols. Functionally, binds human IgA, IgD and the Fc portion of IgG but not IgM, which may contribute to evasion of the human immune system. The sequence is that of Glycerophosphodiester phosphodiesterase (glpQ) from Treponema pallidum (strain Nichols).